The primary structure comprises 393 residues: NAD(P)H-quinone oxidoreductase subunit H, chloroplastic (393 aa).

Belongs to the complex I 49 kDa subunit family. NDH is composed of at least 16 different subunits, 5 of which are encoded in the nucleus.

The protein resides in the plastid. The protein localises to the chloroplast thylakoid membrane. It catalyses the reaction a plastoquinone + NADH + (n+1) H(+)(in) = a plastoquinol + NAD(+) + n H(+)(out). The catalysed reaction is a plastoquinone + NADPH + (n+1) H(+)(in) = a plastoquinol + NADP(+) + n H(+)(out). NDH shuttles electrons from NAD(P)H:plastoquinone, via FMN and iron-sulfur (Fe-S) centers, to quinones in the photosynthetic chain and possibly in a chloroplast respiratory chain. The immediate electron acceptor for the enzyme in this species is believed to be plastoquinone. Couples the redox reaction to proton translocation, and thus conserves the redox energy in a proton gradient. The chain is NAD(P)H-quinone oxidoreductase subunit H, chloroplastic from Hordeum vulgare (Barley).